The following is a 433-amino-acid chain: Adenylosuccinate synthetase (433 aa).

Residues 11–17 (GDEGKGK) and 39–41 (GHT) contribute to the GTP site. Catalysis depends on aspartate 12, which acts as the Proton acceptor. Positions 12 and 39 each coordinate Mg(2+). IMP-binding positions include 12–15 (DEGK), 37–40 (NAGH), threonine 134, arginine 148, asparagine 230, threonine 245, and arginine 309. The active-site Proton donor is histidine 40. 305–311 (VTTGRKR) provides a ligand contact to substrate. GTP contacts are provided by residues arginine 311, 337-339 (KLD), and 419-421 (GTG).

Belongs to the adenylosuccinate synthetase family. Homodimer. The cofactor is Mg(2+).

It localises to the cytoplasm. It carries out the reaction IMP + L-aspartate + GTP = N(6)-(1,2-dicarboxyethyl)-AMP + GDP + phosphate + 2 H(+). It participates in purine metabolism; AMP biosynthesis via de novo pathway; AMP from IMP: step 1/2. Functionally, plays an important role in the de novo pathway and in the salvage pathway of purine nucleotide biosynthesis. Catalyzes the first committed step in the biosynthesis of AMP from IMP. The polypeptide is Adenylosuccinate synthetase (Eremothecium gossypii (strain ATCC 10895 / CBS 109.51 / FGSC 9923 / NRRL Y-1056) (Yeast)).